A 371-amino-acid chain; its full sequence is UPF0284 protein tll2306 (371 aa).

This sequence belongs to the UPF0284 family.

This is UPF0284 protein tll2306 from Thermosynechococcus vestitus (strain NIES-2133 / IAM M-273 / BP-1).